The following is a 100-amino-acid chain: NADH-ubiquinone oxidoreductase chain 4L (100 aa).

A run of 3 helical transmembrane segments spans residues 3–23 (ILNH…GIIL), 28–48 (IIII…NFIY), and 64–84 (LILT…IVFF).

It belongs to the complex I subunit 4L family.

Its subcellular location is the mitochondrion membrane. The enzyme catalyses a ubiquinone + NADH + 5 H(+)(in) = a ubiquinol + NAD(+) + 4 H(+)(out). Core subunit of the mitochondrial membrane respiratory chain NADH dehydrogenase (Complex I) that is believed to belong to the minimal assembly required for catalysis. Complex I functions in the transfer of electrons from NADH to the respiratory chain. The immediate electron acceptor for the enzyme is believed to be ubiquinone. This is NADH-ubiquinone oxidoreductase chain 4L (ND4L) from Phytophthora infestans (Potato late blight agent).